Consider the following 213-residue polypeptide: GTP cyclohydrolase 1 (213 aa).

Zn(2+)-binding residues include cysteine 104, histidine 107, and cysteine 175.

This sequence belongs to the GTP cyclohydrolase I family. In terms of assembly, homomer.

It carries out the reaction GTP + H2O = 7,8-dihydroneopterin 3'-triphosphate + formate + H(+). Its pathway is cofactor biosynthesis; 7,8-dihydroneopterin triphosphate biosynthesis; 7,8-dihydroneopterin triphosphate from GTP: step 1/1. The protein is GTP cyclohydrolase 1 of Brucella suis (strain ATCC 23445 / NCTC 10510).